The primary structure comprises 254 residues: Ribonuclease 3 (254 aa).

Residues 24–154 (LRRLQETLGV…VIGALFLDSG (131 aa)) enclose the RNase III domain. E67 is a Mg(2+) binding site. The active site involves D71. D140 and E143 together coordinate Mg(2+). E143 is an active-site residue. Residues 181 to 250 (DYKSTLQVLA…ARLAWEQLSG (70 aa)) enclose the DRBM domain.

This sequence belongs to the ribonuclease III family. Homodimer. It depends on Mg(2+) as a cofactor.

The protein resides in the cytoplasm. It catalyses the reaction Endonucleolytic cleavage to 5'-phosphomonoester.. Digests double-stranded RNA. Involved in the processing of primary rRNA transcript to yield the immediate precursors to the large and small rRNAs (23S and 16S). Processes some mRNAs, and tRNAs when they are encoded in the rRNA operon. Processes pre-crRNA and tracrRNA of type II CRISPR loci if present in the organism. This chain is Ribonuclease 3, found in Treponema pallidum (strain Nichols).